A 922-amino-acid polypeptide reads, in one-letter code: Putative ATP-dependent helicase/translocase YwqA (922 aa).

The Helicase ATP-binding domain occupies 462–625 (LFLRESGFGA…WSIFDFMNKG (164 aa)). 475-482 (DDMGLGKT) serves as a coordination point for ATP. A DEAQ box motif is present at residues 576 to 579 (DEAQ). Residues 753 to 907 (KLLELMTAIR…QSENWITELS (155 aa)) form the Helicase C-terminal domain.

This sequence belongs to the SNF2/RAD54 helicase family. Interacts with the RNA polymerase core.

This is Putative ATP-dependent helicase/translocase YwqA (ywqA) from Bacillus subtilis (strain 168).